Here is a 297-residue protein sequence, read N- to C-terminus: HTH-type transcriptional regulator ArgP (297 aa).

The HTH lysR-type domain occupies 4 to 60; it reads PDYRTLQALDAVIRERGFERAAQKLCITQSAVSQRIKQLENLFGQPLLVRTVPPRPT. The segment at residues 21 to 40 is a DNA-binding region (H-T-H motif); sequence FERAAQKLCITQSAVSQRIK.

This sequence belongs to the LysR transcriptional regulatory family. In terms of assembly, homodimer.

Controls the transcription of genes involved in arginine and lysine metabolism. This chain is HTH-type transcriptional regulator ArgP, found in Yersinia enterocolitica serotype O:8 / biotype 1B (strain NCTC 13174 / 8081).